Here is a 230-residue protein sequence, read N- to C-terminus: Sugar fermentation stimulation protein homolog (230 aa).

This sequence belongs to the SfsA family.

This Clostridium botulinum (strain ATCC 19397 / Type A) protein is Sugar fermentation stimulation protein homolog.